A 304-amino-acid chain; its full sequence is Pyridoxal 5'-phosphate synthase subunit pyroA (304 aa).

D-ribose 5-phosphate is bound at residue Asp28. Lys85 acts as the Schiff-base intermediate with D-ribose 5-phosphate in catalysis. D-ribose 5-phosphate is bound at residue Gly157. Arg169 contacts D-glyceraldehyde 3-phosphate. D-ribose 5-phosphate contacts are provided by residues Gly224 and 245 to 246 (GS).

The protein belongs to the PdxS/SNZ family.

The catalysed reaction is aldehydo-D-ribose 5-phosphate + D-glyceraldehyde 3-phosphate + L-glutamine = pyridoxal 5'-phosphate + L-glutamate + phosphate + 3 H2O + H(+). It functions in the pathway cofactor biosynthesis; pyridoxal 5'-phosphate biosynthesis. Catalyzes the formation of pyridoxal 5'-phosphate from ribose 5-phosphate (RBP), glyceraldehyde 3-phosphate (G3P) and ammonia. The ammonia is provided by PDX2. Can also use ribulose 5-phosphate and dihydroxyacetone phosphate as substrates, resulting from enzyme-catalyzed isomerization of RBP and G3P, respectively. Also plays an indirect role in resistance to singlet oxygen-generating photosensitizers. The protein is Pyridoxal 5'-phosphate synthase subunit pyroA (pyroA) of Emericella nidulans (strain FGSC A4 / ATCC 38163 / CBS 112.46 / NRRL 194 / M139) (Aspergillus nidulans).